The sequence spans 289 residues: Bifunctional protein FolD (289 aa).

NADP(+)-binding positions include 165 to 167 (GAS) and Ser190.

This sequence belongs to the tetrahydrofolate dehydrogenase/cyclohydrolase family. As to quaternary structure, homodimer.

It carries out the reaction (6R)-5,10-methylene-5,6,7,8-tetrahydrofolate + NADP(+) = (6R)-5,10-methenyltetrahydrofolate + NADPH. It catalyses the reaction (6R)-5,10-methenyltetrahydrofolate + H2O = (6R)-10-formyltetrahydrofolate + H(+). Its pathway is one-carbon metabolism; tetrahydrofolate interconversion. Functionally, catalyzes the oxidation of 5,10-methylenetetrahydrofolate to 5,10-methenyltetrahydrofolate and then the hydrolysis of 5,10-methenyltetrahydrofolate to 10-formyltetrahydrofolate. The sequence is that of Bifunctional protein FolD from Ralstonia pickettii (strain 12J).